The primary structure comprises 262 residues: Matrilysin (262 aa).

Residues 1–12 (LCVLCLLPQSPA) form the signal peptide. Positions 13 to 89 (LPLPREAGGH…PRCGLPDTGE (77 aa)) are cleaved as a propeptide — activation peptide. Residues 80–87 (PRCGLPDT) carry the Cysteine switch motif. Residue cysteine 82 participates in Zn(2+) binding. Aspartate 148 contributes to the Ca(2+) binding site. Zn(2+) is bound by residues histidine 158 and aspartate 160. Residues aspartate 165, glycine 166, glycine 168, and threonine 170 each coordinate Ca(2+). Histidine 173 lines the Zn(2+) pocket. Residues glycine 180, glycine 182, and aspartate 184 each contribute to the Ca(2+) site. Histidine 186 serves as a coordination point for Zn(2+). Ca(2+) contacts are provided by aspartate 188 and glutamate 191. Position 209 (histidine 209) interacts with Zn(2+). Glutamate 210 is an active-site residue. The Zn(2+) site is built by histidine 213 and histidine 219.

It belongs to the peptidase M10A family. It depends on Ca(2+) as a cofactor. Requires Zn(2+) as cofactor.

It localises to the secreted. It is found in the extracellular space. Its subcellular location is the extracellular matrix. It carries out the reaction Cleavage of 14-Ala-|-Leu-15 and 16-Tyr-|-Leu-17 in B chain of insulin. No action on collagen types I, II, IV, V. Cleaves gelatin chain alpha2(I) &gt; alpha1(I).. Its function is as follows. Degrades casein, gelatins of types I, III, IV, and V, and fibronectin. Activates procollagenase. The chain is Matrilysin (MMP7) from Felis catus (Cat).